The chain runs to 434 residues: Serine hydroxymethyltransferase (434 aa).

Residues L133 and 137–139 each bind (6S)-5,6,7,8-tetrahydrofolate; that span reads GHL. The residue at position 242 (K242) is an N6-(pyridoxal phosphate)lysine.

This sequence belongs to the SHMT family. As to quaternary structure, homodimer. Pyridoxal 5'-phosphate serves as cofactor.

The protein resides in the cytoplasm. The catalysed reaction is (6R)-5,10-methylene-5,6,7,8-tetrahydrofolate + glycine + H2O = (6S)-5,6,7,8-tetrahydrofolate + L-serine. It functions in the pathway one-carbon metabolism; tetrahydrofolate interconversion. Its pathway is amino-acid biosynthesis; glycine biosynthesis; glycine from L-serine: step 1/1. In terms of biological role, catalyzes the reversible interconversion of serine and glycine with tetrahydrofolate (THF) serving as the one-carbon carrier. This reaction serves as the major source of one-carbon groups required for the biosynthesis of purines, thymidylate, methionine, and other important biomolecules. Also exhibits THF-independent aldolase activity toward beta-hydroxyamino acids, producing glycine and aldehydes, via a retro-aldol mechanism. The sequence is that of Serine hydroxymethyltransferase from Methylobacterium radiotolerans (strain ATCC 27329 / DSM 1819 / JCM 2831 / NBRC 15690 / NCIMB 10815 / 0-1).